Consider the following 82-residue polypeptide: RNA-binding protein GWCH70_0105 (82 aa).

This sequence belongs to the eukaryotic ribosomal protein eL8 family.

This is RNA-binding protein GWCH70_0105 from Geobacillus sp. (strain WCH70).